We begin with the raw amino-acid sequence, 319 residues long: ATP-dependent 6-phosphofructokinase (319 aa).

Residue Gly11 coordinates ATP. Residue 21 to 25 (RAAVR) coordinates ADP. ATP is bound by residues 72-73 (RS) and 102-105 (GDGS). Asp103 serves as a coordination point for Mg(2+). Residue 125–127 (TID) coordinates substrate. The active-site Proton acceptor is the Asp127. Residue Arg154 coordinates ADP. Substrate is bound by residues Arg162 and 169–171 (MGR). ADP is bound by residues 185 to 187 (GAE), Arg211, and 213 to 215 (KKH). Substrate contacts are provided by residues Glu222, Arg243, and 249–252 (HIQR).

It belongs to the phosphofructokinase type A (PFKA) family. ATP-dependent PFK group I subfamily. Prokaryotic clade 'B1' sub-subfamily. Homotetramer. Mg(2+) serves as cofactor.

The protein resides in the cytoplasm. The catalysed reaction is beta-D-fructose 6-phosphate + ATP = beta-D-fructose 1,6-bisphosphate + ADP + H(+). It participates in carbohydrate degradation; glycolysis; D-glyceraldehyde 3-phosphate and glycerone phosphate from D-glucose: step 3/4. Allosterically activated by ADP and other diphosphonucleosides, and allosterically inhibited by phosphoenolpyruvate. Catalyzes the phosphorylation of D-fructose 6-phosphate to fructose 1,6-bisphosphate by ATP, the first committing step of glycolysis. This Brevibacillus brevis (strain 47 / JCM 6285 / NBRC 100599) protein is ATP-dependent 6-phosphofructokinase.